The sequence spans 418 residues: Arrestin domain-containing protein 4 (418 aa).

2 consecutive short sequence motifs (PPxY motif) follow at residues 350–353 and 395–398; these read PPNY and PPLY.

Belongs to the arrestin family. Interacts with ADRB2. Interacts (via PPxY motifs) with ITCH, NEDD4L and WWP2. Interacts with AVPR2. Identified in a complex containing at least ARRDC4, AVPR2 and HGS. Interacts with SLC11A2; controls the incorporation of SLC11A2 into extracellular vesicles through an ubiquitination-dependent mechanism. Interacts with TRIM65.

It localises to the early endosome. It is found in the cell membrane. Its subcellular location is the cytoplasmic vesicle. In terms of biological role, functions as an adapter recruiting ubiquitin-protein ligases to their specific substrates. Plays a role in endocytosis of activated G protein-coupled receptors (GPCRs). Through an ubiquitination-dependent mechanism also plays a role in the incorporation of SLC11A2 into extracellular vesicles. May play a role in glucose uptake. Participates in innate immune response by promoting IFIH1/MDA5 activation through interaction with TRIM65. This chain is Arrestin domain-containing protein 4 (ARRDC4), found in Homo sapiens (Human).